We begin with the raw amino-acid sequence, 233 residues long: Uracil-DNA glycosylase (233 aa).

D70 functions as the Proton acceptor in the catalytic mechanism.

The protein belongs to the uracil-DNA glycosylase (UDG) superfamily. UNG family.

Its subcellular location is the cytoplasm. The catalysed reaction is Hydrolyzes single-stranded DNA or mismatched double-stranded DNA and polynucleotides, releasing free uracil.. Excises uracil residues from the DNA which can arise as a result of misincorporation of dUMP residues by DNA polymerase or due to deamination of cytosine. The sequence is that of Uracil-DNA glycosylase from Oleidesulfovibrio alaskensis (strain ATCC BAA-1058 / DSM 17464 / G20) (Desulfovibrio alaskensis).